A 209-amino-acid polypeptide reads, in one-letter code: Cytidylate kinase (209 aa).

7–15 (GPAASGKGT) is a binding site for ATP.

This sequence belongs to the cytidylate kinase family. Type 1 subfamily.

It localises to the cytoplasm. The catalysed reaction is CMP + ATP = CDP + ADP. The enzyme catalyses dCMP + ATP = dCDP + ADP. This Afipia carboxidovorans (strain ATCC 49405 / DSM 1227 / KCTC 32145 / OM5) (Oligotropha carboxidovorans) protein is Cytidylate kinase.